Reading from the N-terminus, the 117-residue chain is Non-specific lipid-transfer protein B (117 aa).

The signal sequence occupies residues 1–25; sequence MAGLVKLSCLVLACMIVAGPIATNA. Cystine bridges form between Cys29–Cys76, Cys39–Cys53, Cys54–Cys99, and Cys74–Cys113.

This sequence belongs to the plant LTP family.

In terms of biological role, plant non-specific lipid-transfer proteins transfer phospholipids as well as galactolipids across membranes. May play a role in wax or cutin deposition in the cell walls of expanding epidermal cells and certain secretory tissues. This Brassica oleracea var. italica (Broccoli) protein is Non-specific lipid-transfer protein B (WAX9B).